The sequence spans 121 residues: Small ribosomal subunit protein bS6 (121 aa).

This sequence belongs to the bacterial ribosomal protein bS6 family.

Functionally, binds together with bS18 to 16S ribosomal RNA. This is Small ribosomal subunit protein bS6 (rpsF) from Rickettsia prowazekii (strain Madrid E).